The following is a 284-amino-acid chain: Bifunctional protein FolD (284 aa).

NADP(+)-binding positions include 166 to 168 (GAS), Ser191, and Ile232.

This sequence belongs to the tetrahydrofolate dehydrogenase/cyclohydrolase family. In terms of assembly, homodimer.

It carries out the reaction (6R)-5,10-methylene-5,6,7,8-tetrahydrofolate + NADP(+) = (6R)-5,10-methenyltetrahydrofolate + NADPH. It catalyses the reaction (6R)-5,10-methenyltetrahydrofolate + H2O = (6R)-10-formyltetrahydrofolate + H(+). It participates in one-carbon metabolism; tetrahydrofolate interconversion. Catalyzes the oxidation of 5,10-methylenetetrahydrofolate to 5,10-methenyltetrahydrofolate and then the hydrolysis of 5,10-methenyltetrahydrofolate to 10-formyltetrahydrofolate. The sequence is that of Bifunctional protein FolD from Neisseria meningitidis serogroup C (strain 053442).